A 714-amino-acid chain; its full sequence is Nucleolin (714 aa).

The interval 1–303 (MVKLAKAGKT…AKKQKVEGSE (303 aa)) is disordered. Lys9, Lys15, and Lys16 each carry N6-acetyllysine. Residues 24-42 (VEEDSEDEEMSEEEDDSSG) are compositionally biased toward acidic residues. Phosphoserine is present on residues Ser28, Ser34, Ser40, and Ser41. Low complexity predominate over residues 55–106 (ATATPAKKVVVSQTKKVAVPTPAKKAAVTPGKKAAATPAKKAVTPAKAVATP). Repeat 1 spans residues 57 to 64 (ATPAKKVV). The interval 57–134 (ATPAKKVVVS…GAVTPAKGAK (78 aa)) is 8 X 8 AA tandem repeats of X-T-P-X-K-K-X-X. The residue at position 66 (Ser66) is a Phosphoserine. Phosphothreonine occurs at positions 68, 75, 83, and 91. 3 repeat units span residues 74-81 (PTPAKKAA), 82-89 (VTPGKKAA), and 90-97 (ATPAKKAV). At Lys95 the chain carries N6-acetyllysine. Residue Thr98 is modified to Phosphothreonine. A 5; truncated repeat occupies 98-103 (TPAKAV). Position 101 is an N6-acetyllysine (Lys101). Repeat 6 spans residues 104–111 (ATPGKKGA). At Thr105 the chain carries Phosphothreonine. Lys108 is modified (N6-acetyllysine). A Phosphothreonine modification is found at Thr112. Lys115 bears the N6-acetyllysine mark. 2 repeat units span residues 119-126 (ATPGKKGA) and 127-134 (VTPAKGAK). Thr120 carries the phosphothreonine modification. Residue Lys123 is modified to N6-acetyllysine. A phosphoserine mark is found at Ser144 and Ser157. Over residues 144–170 (SDEDEDDDDDEDDSDEDEEDEEEDEFE) the composition is skewed to acidic residues. Low complexity predominate over residues 171-187 (PPVVKGKQGKVAAAAPA). Residue Ser188 is modified to Phosphoserine. The span at 188-216 (SEDEDEEEDEEEEEEDEEEEDDSEEEEAM) shows a compositional bias: acidic residues. Thr219 carries the phosphothreonine modification. A compositionally biased stretch (acidic residues) spans 240 to 272 (EEDDDDEEEDEDEEEDEEEEEDEEEEEEEEEEE). Over residues 285–301 (MTKQKEVPEAKKQKVEG) the composition is skewed to basic and acidic residues. Lys298 is covalently cross-linked (Glycyl lysine isopeptide (Lys-Gly) (interchain with G-Cter in SUMO1); alternate). Lys298 participates in a covalent cross-link: Glycyl lysine isopeptide (Lys-Gly) (interchain with G-Cter in SUMO2); alternate. Ser302 bears the Phosphoserine mark. RRM domains are found at residues 308-384 (FNLF…KPKG) and 394-467 (RTLL…YTGE). Lys319 carries the post-translational modification N6-acetyllysine. Residue Lys325 forms a Glycyl lysine isopeptide (Lys-Gly) (interchain with G-Cter in SUMO1); alternate linkage. Lys325 participates in a covalent cross-link: Glycyl lysine isopeptide (Lys-Gly) (interchain with G-Cter in SUMO2); alternate. An N6-acetyllysine modification is found at Lys349. Ser357 is modified (phosphoserine). Position 368 is a phosphothreonine (Thr368). Lys371 is covalently cross-linked (Glycyl lysine isopeptide (Lys-Gly) (interchain with G-Cter in SUMO2)). A Glycyl lysine isopeptide (Lys-Gly) (interchain with G-Cter in SUMO2); alternate cross-link involves residue Lys378. Residue Lys378 is modified to N6-acetyllysine; alternate. Lys399 is subject to N6-acetyllysine. The residue at position 402 (Ser402) is a Phosphoserine. Thr406 is subject to Phosphothreonine. N6-acetyllysine is present on residues Lys428 and Lys445. Ser459 and Ser461 each carry phosphoserine. An N6-acetyllysine mark is found at Lys468 and Lys477. In terms of domain architecture, RRM 3 spans 486–560 (KTLVLSNLSY…RTIRLELQGP (75 aa)). A Glycyl lysine isopeptide (Lys-Gly) (interchain with G-Cter in SUMO2); alternate cross-link involves residue Lys513. At Lys513 the chain carries N6-acetyllysine; alternate. The residue at position 521 (Lys521) is an N6-acetyllysine. The residue at position 563 (Ser563) is a Phosphoserine. Lys572 carries the post-translational modification N6-acetyllysine. Residues 572-647 (KTLFVKGLSE…NKVTLDWAKP (76 aa)) form the RRM 4 domain. Residue Lys577 forms a Glycyl lysine isopeptide (Lys-Gly) (interchain with G-Cter in SUMO2); alternate linkage. Lys577 carries the N6-acetyllysine; alternate modification. The residue at position 580 (Ser580) is a Phosphoserine. Lys589 participates in a covalent cross-link: Glycyl lysine isopeptide (Lys-Gly) (interchain with G-Cter in SUMO1); alternate. A Glycyl lysine isopeptide (Lys-Gly) (interchain with G-Cter in SUMO2); alternate cross-link involves residue Lys589. Phosphoserine is present on residues Ser591 and Ser619. A Glycyl lysine isopeptide (Lys-Gly) (interchain with G-Cter in SUMO2) cross-link involves residue Lys624. The disordered stretch occupies residues 642–714 (LDWAKPKGEG…KPQGKKTKFE (73 aa)). An N6-acetyllysine modification is found at Lys646. A compositionally biased stretch (gly residues) spans 650–703 (EGGFGGRGGGRGGFGGRGGGRGGGRGGFGGRGRGGFGGRGGFRGGRGGGGGGGD). Residues Arg656, Arg660, Arg666, Arg670, Arg674, Arg680, Arg682, Arg688, and Arg692 each carry the asymmetric dimethylarginine modification. Arg695 carries the post-translational modification Asymmetric dimethylarginine; alternate. An Omega-N-methylarginine; alternate modification is found at Arg695.

In terms of assembly, identified in a IGF2BP1-dependent mRNP granule complex containing untranslated mRNAs. Component of the SWAP complex that consists of NPM1, NCL/nucleolin, PARP1 and SWAP70. Component of a complex which is at least composed of HTATSF1/Tat-SF1, the P-TEFb complex components CDK9 and CCNT1, RNA polymerase II, SUPT5H, and NCL/nucleolin. Interacts with AICDA. Interacts with APTX. Interacts with C1QBP. Interacts with ERBB4. Interacts (via C-terminus) with FMR1 isoform 6 (via N-terminus). Interacts with GZF1; this interaction is important for nucleolar localization of GZF1. Interacts with NSUN2. Interacts with NVL. Interacts (via N-terminus domain) with SETX. Interacts (via RRM1 and C-terminal RRM4/Arg/Gly-rich domains) with TERT; the interaction is important for nucleolar localization of TERT. Interacts with WDR46. Interacts with ZFP36. Interacts with LRRC34. Interacts with RRP1B. Interacts with HNRNPU; this interaction occurs during mitosis. Interacts with RIOK1; RIOK1 recruits NCL to PRMT5 for symmetrically methylation. Interacts with ZBTB7B. Interacts with MDK; this interaction promotes NCL clustering and lateral movements of this complex into lipid rafts leading to MDK internalization. Interacts with HDGF. Interacts with ALKBH2. Interacts with IGFBP5; this interaction is necessary for IGFBP5 localization to the nucleus. Interacts with DDX24 (when ubiquitinated); this interaction may be important during ribosome biogenesis. In terms of processing, some glutamate residues are glycylated by TTLL8. This modification occurs exclusively on glutamate residues and results in a glycine chain on the gamma-carboxyl group. Symmetrically methylated by PRMT5.

Its subcellular location is the nucleus. The protein localises to the nucleolus. It localises to the cytoplasm. Its function is as follows. Nucleolin is the major nucleolar protein of growing eukaryotic cells. It is found associated with intranucleolar chromatin and pre-ribosomal particles. It induces chromatin decondensation by binding to histone H1. It is thought to play a role in pre-rRNA transcription and ribosome assembly. May play a role in the process of transcriptional elongation. Binds RNA oligonucleotides with 5'-UUAGGG-3' repeats more tightly than the telomeric single-stranded DNA 5'-TTAGGG-3' repeats. In Mesocricetus auratus (Golden hamster), this protein is Nucleolin (NCL).